The chain runs to 239 residues: Purine nucleoside phosphorylase DeoD-type (239 aa).

His-5 contributes to the a purine D-ribonucleoside binding site. Phosphate-binding positions include Gly-21, Arg-25, Arg-44, and 88 to 91 (RVGS). A purine D-ribonucleoside contacts are provided by residues 180 to 182 (EME) and 204 to 205 (SD). The Proton donor role is filled by Asp-205.

This sequence belongs to the PNP/UDP phosphorylase family. Homohexamer; trimer of homodimers.

It carries out the reaction a purine D-ribonucleoside + phosphate = a purine nucleobase + alpha-D-ribose 1-phosphate. The enzyme catalyses a purine 2'-deoxy-D-ribonucleoside + phosphate = a purine nucleobase + 2-deoxy-alpha-D-ribose 1-phosphate. Functionally, catalyzes the reversible phosphorolytic breakdown of the N-glycosidic bond in the beta-(deoxy)ribonucleoside molecules, with the formation of the corresponding free purine bases and pentose-1-phosphate. The chain is Purine nucleoside phosphorylase DeoD-type from Salmonella agona (strain SL483).